A 189-amino-acid polypeptide reads, in one-letter code: Phosphoheptose isomerase (189 aa).

One can recognise an SIS domain in the interval 34–189; it reads LVAALKGGKK…CDLVEKGLFK (156 aa). 49 to 51 lines the substrate pocket; sequence NGG. Residues H58 and E62 each coordinate Zn(2+). Substrate contacts are provided by residues E62, 91-92, 117-119, S122, and Q169; these read ND and STS. Q169 and H177 together coordinate Zn(2+).

The protein belongs to the SIS family. GmhA subfamily. In terms of assembly, homotetramer. It depends on Zn(2+) as a cofactor.

The protein resides in the cytoplasm. The enzyme catalyses 2 D-sedoheptulose 7-phosphate = D-glycero-alpha-D-manno-heptose 7-phosphate + D-glycero-beta-D-manno-heptose 7-phosphate. It participates in carbohydrate biosynthesis; D-glycero-D-manno-heptose 7-phosphate biosynthesis; D-glycero-alpha-D-manno-heptose 7-phosphate and D-glycero-beta-D-manno-heptose 7-phosphate from sedoheptulose 7-phosphate: step 1/1. Catalyzes the isomerization of sedoheptulose 7-phosphate in D-glycero-D-manno-heptose 7-phosphate. The polypeptide is Phosphoheptose isomerase (Geobacter metallireducens (strain ATCC 53774 / DSM 7210 / GS-15)).